The primary structure comprises 869 residues: Rho GTPase-activating protein 27 (869 aa).

The SH3 domain occupies 6–69; it reads EGDVYVLVEH…PAQYVRELPA (64 aa). A disordered region spans residues 104 to 137; it reads GADGSSAEPRGRASSLCGPARQRTSGQRNSLAPG. Phosphoserine occurs at positions 155, 215, and 249. 2 WW domains span residues 246–280 and 299–333; these read PRLS…SPFE and ESLE…DETE. Disordered regions lie at residues 275–299, 331–389, and 447–474; these read WESP…GSGE, ETEE…DLGP, and VPVP…PEEK. Positions 331–343 are enriched in acidic residues; sequence ETEELEDDPEEQL. The segment covering 345 to 356 has biased composition (polar residues); sequence MQPSLSPRSPGQ. S350 is modified (phosphoserine). The region spanning 414-447 is the WW 3 domain; it reads QFTQEQWVRLEDQEGKPYFYNPEDSSVQWELPQV. S459 and S462 each carry phosphoserine. T464 is subject to Phosphothreonine. The residue at position 469 (S469) is a Phosphoserine. Positions 477 to 593 constitute a PH domain; that stretch reads TLDKAGVLHR…WHKAIAEGIE (117 aa). The segment at 598–644 is disordered; the sequence is DLPQREEGEPSSADFGSSERLGSWKEEDVRPNAASPSLNPGSQESDL. Residues 631–642 show a composition bias toward polar residues; the sequence is ASPSLNPGSQES. The residue at position 632 (S632) is a Phosphoserine. The region spanning 677–866 is the Rho-GAP domain; sequence CALAQLCERE…LILHQCADIF (190 aa).

As to quaternary structure, interacts with SH3KBP1/CIN85.

Its subcellular location is the cytoplasm. The protein localises to the membrane. Functionally, rho GTPase-activating protein which may be involved in clathrin-mediated endocytosis. GTPase activators for the Rho-type GTPases act by converting them to an inactive GDP-bound state. Has activity toward CDC42 and RAC1. The protein is Rho GTPase-activating protein 27 (Arhgap27) of Rattus norvegicus (Rat).